The sequence spans 451 residues: V-type proton ATPase subunit S1 (451 aa).

Residues 1–16 (MRVLFAVFSLIMACQA) form the signal peptide. At 17–407 (YDAVLFSNSR…DCTGTFSSGS (391 aa)) the chain is on the lumenal side. N-linked (GlcNAc...) asparagine glycans are attached at residues Asn191, Asn235, Asn249, and Asn330. The helical transmembrane segment at 408-428 (WMGIVSALVLIAGLMFGYVML) threads the bilayer. Residues 429–451 (QSVQTMDRFDDPKQRQIVINVRE) lie on the Cytoplasmic side of the membrane.

It belongs to the vacuolar ATPase subunit S1 family. In terms of assembly, accessory component of the multisubunit proton-transporting vacuolar (V)-ATPase protein pump. In terms of tissue distribution, expressed in pharynx, hypodermis, intestine, vulval hypodermis and the H-shape excretory cell.

It localises to the membrane. Functionally, accessory subunit of the proton-transporting vacuolar (V)-ATPase protein pump, which is required for luminal acidification of secretory vesicles. In the germline, required for the trafficking of the receptor RME-2 to the oocyte cell membrane where it regulates the uptake of yolk proteins. Also, plays an essential role in osmoregulation in the embryo, probably by regulating the proper formation of the eggshell. In Caenorhabditis elegans, this protein is V-type proton ATPase subunit S1.